We begin with the raw amino-acid sequence, 527 residues long: Berberine bridge enzyme-like 14 (527 aa).

Residues 1 to 23 form the signal peptide; sequence MKSSTTQTLIFTVFLLLIPTSFA. The cysteines at positions 35 and 96 are disulfide-linked. N-linked (GlcNAc...) asparagine glycosylation is found at N47, N72, N161, N296, N328, N396, and N481. The FAD-binding PCMH-type domain maps to 74–249; that stretch reads TTRKPVAIVA…LAWKIKLVPV (176 aa). The 6-(S-cysteinyl)-8alpha-(pros-histidyl)-FAD (His-Cys) cross-link spans 111 to 174; sequence HDYDGMSYLS…NLRGFPAGIC (64 aa).

It belongs to the oxygen-dependent FAD-linked oxidoreductase family. It depends on FAD as a cofactor. Post-translationally, the FAD cofactor is bound via a bicovalent 6-S-cysteinyl, 8alpha-N1-histidyl FAD linkage.

It localises to the secreted. It is found in the cell wall. In Arabidopsis thaliana (Mouse-ear cress), this protein is Berberine bridge enzyme-like 14.